A 282-amino-acid chain; its full sequence is Bifunctional protein FolD (282 aa).

NADP(+) is bound by residues 164 to 166 (GAS), I189, and I230.

This sequence belongs to the tetrahydrofolate dehydrogenase/cyclohydrolase family. As to quaternary structure, homodimer.

The catalysed reaction is (6R)-5,10-methylene-5,6,7,8-tetrahydrofolate + NADP(+) = (6R)-5,10-methenyltetrahydrofolate + NADPH. It carries out the reaction (6R)-5,10-methenyltetrahydrofolate + H2O = (6R)-10-formyltetrahydrofolate + H(+). The protein operates within one-carbon metabolism; tetrahydrofolate interconversion. In terms of biological role, catalyzes the oxidation of 5,10-methylenetetrahydrofolate to 5,10-methenyltetrahydrofolate and then the hydrolysis of 5,10-methenyltetrahydrofolate to 10-formyltetrahydrofolate. This is Bifunctional protein FolD from Campylobacter jejuni subsp. jejuni serotype O:6 (strain 81116 / NCTC 11828).